The chain runs to 282 residues: Phosphatidylserine decarboxylase proenzyme (282 aa).

Active-site charge relay system; for autoendoproteolytic cleavage activity residues include D88, H144, and S247. S247 (schiff-base intermediate with substrate; via pyruvic acid; for decarboxylase activity) is an active-site residue. S247 bears the Pyruvic acid (Ser); by autocatalysis mark.

Belongs to the phosphatidylserine decarboxylase family. PSD-B subfamily. Prokaryotic type I sub-subfamily. As to quaternary structure, heterodimer of a large membrane-associated beta subunit and a small pyruvoyl-containing alpha subunit. Pyruvate is required as a cofactor. In terms of processing, is synthesized initially as an inactive proenzyme. Formation of the active enzyme involves a self-maturation process in which the active site pyruvoyl group is generated from an internal serine residue via an autocatalytic post-translational modification. Two non-identical subunits are generated from the proenzyme in this reaction, and the pyruvate is formed at the N-terminus of the alpha chain, which is derived from the carboxyl end of the proenzyme. The autoendoproteolytic cleavage occurs by a canonical serine protease mechanism, in which the side chain hydroxyl group of the serine supplies its oxygen atom to form the C-terminus of the beta chain, while the remainder of the serine residue undergoes an oxidative deamination to produce ammonia and the pyruvoyl prosthetic group on the alpha chain. During this reaction, the Ser that is part of the protease active site of the proenzyme becomes the pyruvoyl prosthetic group, which constitutes an essential element of the active site of the mature decarboxylase.

It localises to the cell membrane. It carries out the reaction a 1,2-diacyl-sn-glycero-3-phospho-L-serine + H(+) = a 1,2-diacyl-sn-glycero-3-phosphoethanolamine + CO2. The protein operates within phospholipid metabolism; phosphatidylethanolamine biosynthesis; phosphatidylethanolamine from CDP-diacylglycerol: step 2/2. In terms of biological role, catalyzes the formation of phosphatidylethanolamine (PtdEtn) from phosphatidylserine (PtdSer). This is Phosphatidylserine decarboxylase proenzyme from Xanthomonas oryzae pv. oryzae (strain KACC10331 / KXO85).